Here is a 268-residue protein sequence, read N- to C-terminus: Eukaryotic translation initiation factor 2 subunit beta (268 aa).

Residues 1-12 (MADEINEIREEQ) are compositionally biased toward basic and acidic residues. The disordered stretch occupies residues 1 to 85 (MADEINEIRE…LNNESVDAGE (85 aa)). Ala2 carries the N-acetylalanine modification. Phosphoserine; by CK2 is present on residues Ser42, Ser80, and Ser112. The C4-type zinc finger occupies 222 to 246 (CLGCKSPDTILSKENRLFFLRCEKC).

Belongs to the eIF-2-beta/eIF-5 family. In terms of assembly, eukaryotic translation initiation factor 2 eIF2 is a heterotrimeric complex composed of an alpha, a beta and a gamma subunit. In terms of processing, phosphorylated at Ser-42, Ser-80 and Ser-112 by CK2.

It is found in the cytoplasm. Its subcellular location is the cytosol. In terms of biological role, component of the eIF2 complex that functions in the early steps of protein synthesis by forming a ternary complex with GTP and initiator tRNA. This complex binds to a 40S ribosomal subunit, followed by mRNA binding to form a 43S pre-initiation complex (43S PIC). Junction of the 60S ribosomal subunit to form the 80S initiation complex is preceded by hydrolysis of the GTP bound to eIF2 and release of an eIF2-GDP binary complex. In order for eIF2 to recycle and catalyze another round of initiation, the GDP bound to eIF2 must exchange with GTP by way of a reaction catalyzed by eIF2B. In Arabidopsis thaliana (Mouse-ear cress), this protein is Eukaryotic translation initiation factor 2 subunit beta.